The following is a 312-amino-acid chain: Polyprenyl transferase atnF (312 aa).

The N-linked (GlcNAc...) asparagine glycan is linked to Asn-9. Helical transmembrane passes span 30 to 50, 64 to 84, 111 to 131, 132 to 152, 154 to 174, 185 to 205, 229 to 249, 255 to 275, and 288 to 308; these read LHTI…FFYA, FIGI…WNDI, AMWV…WLLG, ADVT…PLCK, IIWA…LPPW, GLLP…LDLI, YLKA…VLAA, GFLL…WSIM, and IFLV…LNVS.

The protein belongs to the UbiA prenyltransferase family. Mg(2+) is required as a cofactor.

It localises to the membrane. It functions in the pathway secondary metabolite biosynthesis; terpenoid biosynthesis. Polyprenyl transferase; part of the gene cluster that mediates the biosynthesis of the meroterpenoids arthripenoids. The pathway begins with the HR-PKS atnH that catalyzes two chain-extension steps to form a reduced triketide, which then primes the SAT domain in the NR-PKS atnG to initiate three more cycles of extension to give a linear hexaketide corresponding to the polyketide part of arthripenoids. The FAD-dependent monooxygenase atnJ then performs an oxidative decarboxylation at C11 of the atnH/atnG product, via an electrophilic aromatic hydroxylation with concomitant ipso-decarboxylation. The membrane-bound polyprenyl transferase atnF then introduces a farnesyl group before the FAD-dependent monooxygenase atnK functions as the first epoxidase on terminal C12'-C13' olefin, followed by a second epoxidation on C7'-C8' catalyzed by atnA. The terpene cyclase/mutase atnI then initiates the sequential tricyclic ring formation through protonation of the terminal epoxide and catalyzes the regioselective and stereoselective 6/6/6-tricyclic ring formation. The cytochrome P450 monooxygenase atnM is responsible for hydroxylating both C1' and C10'. The next steps may involve ketoreduction and acetyl transfer by the ketoreductase atnB and the acetyltransferase atnC, and lead to the production of arthripenoid B, the final biosynthetic product of the atn cluster. The hydroquinone moiety in arthripenoid B is prone to undergo spontaneous oxidation to afford a benzoquinone compound, a key intermediate for generating structure diversity. For instance, addition of a cysteine followed by ring contraction gives arthripenoid A, tautomerization gives the main product arthripenoid C, addition of a molecular of water or amine affords arthripenoid D or E, respectively, and loss of one water forms arthripenoid F. The sequence is that of Polyprenyl transferase atnF from Arthrinium sp.